Reading from the N-terminus, the 40-residue chain is Natriuretic peptide PaNP-b (40 aa).

Cys-9 and Cys-25 are disulfide-bonded. A propeptide spanning residues Ile-36–Ser-40 is cleaved from the precursor.

This sequence belongs to the natriuretic peptide family. In terms of tissue distribution, expressed by the venom gland.

The protein resides in the secreted. Snake venom natriuretic peptide that targets both NPR1 and NPR2. Exhibits hypotensive and vasodepressor activities. The sequence is that of Natriuretic peptide PaNP-b from Pseudechis australis (Mulga snake).